Here is a 643-residue protein sequence, read N- to C-terminus: tRNA 5-methylaminomethyl-2-thiouridine biosynthesis bifunctional protein MnmC (643 aa).

Residues 1 to 223 form a tRNA (mnm(5)s(2)U34)-methyltransferase region; it reads MPDRLVSATL…VDDRLVGDYA (223 aa). Residues 247–643 form an FAD-dependent cmnm(5)s(2)U34 oxidoreductase region; sequence IGAGLAGCAV…LRARRVGSAG (397 aa).

This sequence in the N-terminal section; belongs to the methyltransferase superfamily. tRNA (mnm(5)s(2)U34)-methyltransferase family. In the C-terminal section; belongs to the DAO family. Requires FAD as cofactor.

Its subcellular location is the cytoplasm. It carries out the reaction 5-aminomethyl-2-thiouridine(34) in tRNA + S-adenosyl-L-methionine = 5-methylaminomethyl-2-thiouridine(34) in tRNA + S-adenosyl-L-homocysteine + H(+). Functionally, catalyzes the last two steps in the biosynthesis of 5-methylaminomethyl-2-thiouridine (mnm(5)s(2)U) at the wobble position (U34) in tRNA. Catalyzes the FAD-dependent demodification of cmnm(5)s(2)U34 to nm(5)s(2)U34, followed by the transfer of a methyl group from S-adenosyl-L-methionine to nm(5)s(2)U34, to form mnm(5)s(2)U34. This Burkholderia orbicola (strain AU 1054) protein is tRNA 5-methylaminomethyl-2-thiouridine biosynthesis bifunctional protein MnmC.